Consider the following 99-residue polypeptide: Large ribosomal subunit protein bL27 (99 aa).

A propeptide spanning residues 1–10 (MKLIFDIQLF) is cleaved from the precursor.

It belongs to the bacterial ribosomal protein bL27 family. In terms of processing, the N-terminus is cleaved by ribosomal processing cysteine protease Prp.

The protein is Large ribosomal subunit protein bL27 of Caldicellulosiruptor bescii (strain ATCC BAA-1888 / DSM 6725 / KCTC 15123 / Z-1320) (Anaerocellum thermophilum).